Consider the following 229-residue polypeptide: Putative N-acetylmannosamine-6-phosphate 2-epimerase 2 (229 aa).

This sequence belongs to the NanE family.

It catalyses the reaction an N-acyl-D-glucosamine 6-phosphate = an N-acyl-D-mannosamine 6-phosphate. It participates in amino-sugar metabolism; N-acetylneuraminate degradation; D-fructose 6-phosphate from N-acetylneuraminate: step 3/5. Functionally, converts N-acetylmannosamine-6-phosphate (ManNAc-6-P) to N-acetylglucosamine-6-phosphate (GlcNAc-6-P). The sequence is that of Putative N-acetylmannosamine-6-phosphate 2-epimerase 2 (nanE2) from Salmonella typhimurium (strain LT2 / SGSC1412 / ATCC 700720).